The chain runs to 490 residues: Cytochrome P450 2C13, male-specific (490 aa).

Position 435 (Cys-435) interacts with heme.

The protein belongs to the cytochrome P450 family. Requires heme as cofactor. As to expression, liver, and to a lesser extent in prostate, kidney, heart and brain.

Its subcellular location is the endoplasmic reticulum membrane. It localises to the microsome membrane. It carries out the reaction an organic molecule + reduced [NADPH--hemoprotein reductase] + O2 = an alcohol + oxidized [NADPH--hemoprotein reductase] + H2O + H(+). Functionally, cytochromes P450 are a group of heme-thiolate monooxygenases. In liver microsomes, this enzyme is involved in an NADPH-dependent electron transport pathway. It oxidizes a variety of structurally unrelated compounds, including steroids, fatty acids, and xenobiotics. The chain is Cytochrome P450 2C13, male-specific (Cyp2c13) from Rattus norvegicus (Rat).